The primary structure comprises 466 residues: UPF0652 protein C16A11.03c (466 aa).

It belongs to the UPF0652 family.

The protein resides in the cytoplasm. It is found in the nucleus. The chain is UPF0652 protein C16A11.03c from Schizosaccharomyces pombe (strain 972 / ATCC 24843) (Fission yeast).